A 507-amino-acid polypeptide reads, in one-letter code: uncharacterized protein (507 aa).

Transmembrane regions (helical) follow at residues 11-31, 97-117, 125-145, 149-169, 187-207, 209-229, 283-303, 326-346, 354-374, 388-408, 423-443, and 452-472; these read ILCF…IFPI, AWIA…YGHL, PVSF…GFAP, VFAV…IVFY, FFNW…CGYW, SAAI…LWLP, LFSS…WFST, FVQA…DLFI, LHQV…ALMI, LAII…WDAC, IGIG…PQMA, and IPYI…CFFL.

This sequence belongs to the major facilitator superfamily.

It is found in the membrane. This is an uncharacterized protein from Caenorhabditis elegans.